The following is a 571-amino-acid chain: Dual specificity testis-specific protein kinase 2 (571 aa).

The region spanning 58–313 is the Protein kinase domain; sequence DFTCEKIGSG…EIGKTLEEIL (256 aa). ATP is bound by residues 64–72 and Lys87; that span reads IGSGFFSEV. Residue Asp176 is the Proton acceptor of the active site. Phosphoserine; by autocatalysis is present on Ser219. 3 positions are modified to phosphoserine: Ser369, Ser456, and Ser460. The segment at 521–571 is disordered; it reads ENGFGSRPQGTSPCPAGASEEMEVEERPAGSTPATFSTSGIGLQTQGKQDG. Residues 552–571 show a composition bias toward polar residues; that stretch reads TPATFSTSGIGLQTQGKQDG.

The protein belongs to the protein kinase superfamily. TKL Ser/Thr protein kinase family. It depends on Mg(2+) as a cofactor. The cofactor is Mn(2+). In terms of tissue distribution, predominantly expressed in testis and prostate. Found predominantly in non-germinal Sertoli cells.

The protein resides in the nucleus. The catalysed reaction is L-seryl-[protein] + ATP = O-phospho-L-seryl-[protein] + ADP + H(+). It carries out the reaction L-threonyl-[protein] + ATP = O-phospho-L-threonyl-[protein] + ADP + H(+). The enzyme catalyses L-tyrosyl-[protein] + ATP = O-phospho-L-tyrosyl-[protein] + ADP + H(+). Its activity is regulated as follows. Activated by autophosphorylation on Ser-219. Its function is as follows. Dual specificity protein kinase activity catalyzing autophosphorylation and phosphorylation of exogenous substrates on both serine/threonine and tyrosine residues. Phosphorylates cofilin at 'Ser-3'. May play an important role in spermatogenesis. The chain is Dual specificity testis-specific protein kinase 2 (TESK2) from Homo sapiens (Human).